A 353-amino-acid polypeptide reads, in one-letter code: Putative transport protein aq_740 (353 aa).

The next 8 membrane-spanning stretches (helical) occupy residues 4–24 (LSLF…LYLL), 28–48 (FNPI…YGFI), 60–80 (FLVI…FAVI), 156–176 (VYTA…LFFI), 209–229 (VLAV…MGFI), 240–260 (LIWA…AAFV), 268–288 (LFTT…TFLI), and 309–329 (VALF…GVFL).

This sequence belongs to the autoinducer-2 exporter (AI-2E) (TC 2.A.86) family.

It is found in the cell membrane. The protein is Putative transport protein aq_740 of Aquifex aeolicus (strain VF5).